Here is a 447-residue protein sequence, read N- to C-terminus: Na(+)-translocating NADH-quinone reductase subunit A (447 aa).

Belongs to the NqrA family. Composed of six subunits; NqrA, NqrB, NqrC, NqrD, NqrE and NqrF.

It carries out the reaction a ubiquinone + n Na(+)(in) + NADH + H(+) = a ubiquinol + n Na(+)(out) + NAD(+). In terms of biological role, NQR complex catalyzes the reduction of ubiquinone-1 to ubiquinol by two successive reactions, coupled with the transport of Na(+) ions from the cytoplasm to the periplasm. NqrA to NqrE are probably involved in the second step, the conversion of ubisemiquinone to ubiquinol. The chain is Na(+)-translocating NADH-quinone reductase subunit A from Neisseria meningitidis serogroup B (strain ATCC BAA-335 / MC58).